Consider the following 424-residue polypeptide: CinA-like protein (424 aa).

This sequence belongs to the CinA family.

The sequence is that of CinA-like protein from Shewanella baltica (strain OS195).